Here is a 295-residue protein sequence, read N- to C-terminus: Probable peptidyl-prolyl cis-trans isomerase B (295 aa).

2 disordered regions span residues 105-128 and 274-295; these read SADK…PATV and IASG…LRLD. A PPIase cyclophilin-type domain is found at 126 to 294; it reads ATVSASMATN…TEVTIESLRL (169 aa).

Belongs to the cyclophilin-type PPIase family.

It carries out the reaction [protein]-peptidylproline (omega=180) = [protein]-peptidylproline (omega=0). PPIases accelerate the folding of proteins. It catalyzes the cis-trans isomerization of proline imidic peptide bonds in oligopeptides. The sequence is that of Probable peptidyl-prolyl cis-trans isomerase B (ppiB) from Mycobacterium leprae (strain TN).